Here is a 272-residue protein sequence, read N- to C-terminus: 1,4-dihydroxy-2-naphthoyl-CoA synthase (272 aa).

Residues arginine 33, 72–76, tyrosine 84, 116–120, threonine 142, serine 148, tyrosine 245, and lysine 260 contribute to the substrate site; these read SGGDQ and YAIGG. 141 to 143 contacts hydrogencarbonate; it reads QTG.

It belongs to the enoyl-CoA hydratase/isomerase family. MenB subfamily. Hydrogencarbonate serves as cofactor.

It catalyses the reaction 2-succinylbenzoyl-CoA + H(+) = 1,4-dihydroxy-2-naphthoyl-CoA + H2O. Its pathway is quinol/quinone metabolism; 1,4-dihydroxy-2-naphthoate biosynthesis; 1,4-dihydroxy-2-naphthoate from chorismate: step 6/7. The protein operates within quinol/quinone metabolism; menaquinone biosynthesis. Converts o-succinylbenzoyl-CoA (OSB-CoA) to 1,4-dihydroxy-2-naphthoyl-CoA (DHNA-CoA). This is 1,4-dihydroxy-2-naphthoyl-CoA synthase from Staphylococcus epidermidis (strain ATCC 35984 / DSM 28319 / BCRC 17069 / CCUG 31568 / BM 3577 / RP62A).